Reading from the N-terminus, the 403-residue chain is Phosphopentomutase (403 aa).

Mn(2+)-binding residues include Asp-13, Asp-298, His-303, Asp-339, His-340, and His-351.

The protein belongs to the phosphopentomutase family. Requires Mn(2+) as cofactor.

It localises to the cytoplasm. The enzyme catalyses 2-deoxy-alpha-D-ribose 1-phosphate = 2-deoxy-D-ribose 5-phosphate. The catalysed reaction is alpha-D-ribose 1-phosphate = D-ribose 5-phosphate. It participates in carbohydrate degradation; 2-deoxy-D-ribose 1-phosphate degradation; D-glyceraldehyde 3-phosphate and acetaldehyde from 2-deoxy-alpha-D-ribose 1-phosphate: step 1/2. Isomerase that catalyzes the conversion of deoxy-ribose 1-phosphate (dRib-1-P) and ribose 1-phosphate (Rib-1-P) to deoxy-ribose 5-phosphate (dRib-5-P) and ribose 5-phosphate (Rib-5-P), respectively. This chain is Phosphopentomutase, found in Streptococcus thermophilus (strain ATCC BAA-250 / LMG 18311).